The following is a 121-amino-acid chain: Basic phospholipase A2 BbTX-III (121 aa).

Y27, G29, and G31 together coordinate Ca(2+). Intrachain disulfides connect C28–C44, C43–C95, C49–C121, C50–C88, C58–C82, and C76–C86. H47 is an active-site residue. D48 is a Ca(2+) binding site. Residue D89 is part of the active site.

Belongs to the phospholipase A2 family. Group II subfamily. D49 sub-subfamily. As to quaternary structure, homodimer; non-covalently linked. It depends on Ca(2+) as a cofactor. As to expression, expressed by the venom gland.

It localises to the secreted. It carries out the reaction a 1,2-diacyl-sn-glycero-3-phosphocholine + H2O = a 1-acyl-sn-glycero-3-phosphocholine + a fatty acid + H(+). Its function is as follows. Snake venom phospholipase A2 (PLA2) that exhibits myotoxin and anticoagulant activity. Displays edema-inducing activities in mouse paw. Also displays cytotoxic activity against some cell lines and myotubes, and antimicrobial activities against E.coli, C.albicans and Leishmania. PLA2 catalyzes the calcium-dependent hydrolysis of the 2-acyl groups in 3-sn-phosphoglycerides. In Bothrops brazili (Brazil's lancehead), this protein is Basic phospholipase A2 BbTX-III.